The primary structure comprises 363 residues: Fructose-bisphosphate aldolase C (363 aa).

Residue Tyr5 is modified to Phosphotyrosine. Ser36, Ser39, and Ser45 each carry phosphoserine. Arg56 lines the substrate pocket. Residue Lys111 is modified to N6-acetyllysine. Lys147 is a binding site for substrate. Glu188 serves as the catalytic Proton acceptor. Lys230 functions as the Schiff-base intermediate with dihydroxyacetone-P in the catalytic mechanism.

Belongs to the class I fructose-bisphosphate aldolase family. As to quaternary structure, homotetramer. Interacts with ATP6V1E1. As to expression, expressed exclusively in Purkinje cells in bands running from anterior to posterior across most of the cerebellum. Expressed at higher levels in the brains of BSE-infected animals.

The catalysed reaction is beta-D-fructose 1,6-bisphosphate = D-glyceraldehyde 3-phosphate + dihydroxyacetone phosphate. It participates in carbohydrate degradation; glycolysis; D-glyceraldehyde 3-phosphate and glycerone phosphate from D-glucose: step 4/4. The protein is Fructose-bisphosphate aldolase C (Aldoc) of Mus musculus (Mouse).